The following is an 82-amino-acid chain: Turripeptide Gsp9.2 (82 aa).

A signal peptide spans 1-23; sequence MMAKLMITVMMVLLLSLQQGADG. Residues 24–46 constitute a propeptide that is removed on maturation; that stretch reads RSERWRKNQMAASSIMRNLITAR. Pro49 and Pro50 each carry 4-hydroxyproline. 3 disulfide bridges follow: Cys53–Cys68, Cys58–Cys72, and Cys64–Cys79. Glu56 carries the post-translational modification 4-carboxyglutamate.

This sequence belongs to the Pg turripeptide superfamily. As to expression, expressed by the venom duct.

It is found in the secreted. The polypeptide is Turripeptide Gsp9.2 (Gemmula speciosa (Splendid gem-turris)).